The sequence spans 379 residues: GDP-mannose transporter 1 (379 aa).

Residues M1–S39 are Cytoplasmic-facing. Residues L17–S38 are disordered. A helical transmembrane segment spans residues I40 to V60. Residues M61–D69 are Lumenal-facing. A helical membrane pass occupies residues F70–L90. Topologically, residues C91–W110 are cytoplasmic. The helical transmembrane segment at F111–I133 threads the bilayer. The Lumenal segment spans residues P134–Y136. The chain crosses the membrane as a helical span at residues T137–G156. The Cytoplasmic portion of the chain corresponds to G157 to L162. The helical transmembrane segment at T163–I182 threads the bilayer. Residues K183–T198 are Lumenal-facing. Residues L199 to G219 traverse the membrane as a helical segment. Over M220–D233 the chain is Cytoplasmic. The chain crosses the membrane as a helical span at residues T234–E254. Over D255–G272 the chain is Lumenal. The chain crosses the membrane as a helical span at residues I273–W293. Over C294 to T301 the chain is Cytoplasmic. Residues T302 to F322 traverse the membrane as a helical segment. Residues D323–P325 are Lumenal-facing. Residues V326–V346 traverse the membrane as a helical segment. Over A347–S379 the chain is Cytoplasmic.

The protein belongs to the TPT transporter family. SLC35D subfamily. As to quaternary structure, homooligomer.

It localises to the golgi apparatus membrane. It is found in the cytoplasmic vesicle membrane. Its subcellular location is the endoplasmic reticulum membrane. Functionally, involved in the import of GDP-mannose from the cytoplasm into the Golgi lumen. In Emericella nidulans (strain FGSC A4 / ATCC 38163 / CBS 112.46 / NRRL 194 / M139) (Aspergillus nidulans), this protein is GDP-mannose transporter 1 (gmt1).